A 505-amino-acid polypeptide reads, in one-letter code: Glucan endo-1,3-beta-glucosidase 4 (505 aa).

The signal sequence occupies residues 1–23 (MLLPRWFAEALLLLLSILACSNA). Residues asparagine 70 and asparagine 110 are each glycosylated (N-linked (GlcNAc...) asparagine). Residue glutamate 119 is the Proton donor of the active site. N-linked (GlcNAc...) asparagine glycans are attached at residues asparagine 178 and asparagine 256. The Nucleophile role is filled by glutamate 266. N-linked (GlcNAc...) asparagine glycans are attached at residues asparagine 298, asparagine 338, and asparagine 357. A disulfide bridge connects residues cysteine 363 and cysteine 426. Asparagine 453 is a glycosylation site (N-linked (GlcNAc...) asparagine). Alanine 474 carries the GPI-anchor amidated alanine lipid modification. Residues 475-505 (NARIIFSYHLPILAPLALTLLQLLLQHDRLL) constitute a propeptide, removed in mature form.

This sequence belongs to the glycosyl hydrolase 17 family. Contains two additional disulfide bonds.

Its subcellular location is the cell membrane. The catalysed reaction is Hydrolysis of (1-&gt;3)-beta-D-glucosidic linkages in (1-&gt;3)-beta-D-glucans.. This chain is Glucan endo-1,3-beta-glucosidase 4, found in Arabidopsis thaliana (Mouse-ear cress).